A 226-amino-acid polypeptide reads, in one-letter code: Purine nucleoside phosphorylase Cj1217c (226 aa).

Residues His58, Cys93, and His109 each contribute to the Zn(2+) site.

This sequence belongs to the purine nucleoside phosphorylase YfiH/LACC1 family. As to quaternary structure, homodimer. Cu(2+) is required as a cofactor. Zn(2+) serves as cofactor.

It catalyses the reaction adenosine + phosphate = alpha-D-ribose 1-phosphate + adenine. The catalysed reaction is S-methyl-5'-thioadenosine + phosphate = 5-(methylsulfanyl)-alpha-D-ribose 1-phosphate + adenine. It carries out the reaction inosine + phosphate = alpha-D-ribose 1-phosphate + hypoxanthine. The enzyme catalyses adenosine + H2O + H(+) = inosine + NH4(+). Purine nucleoside enzyme that catalyzes the phosphorolysis of adenosine and inosine nucleosides, yielding D-ribose 1-phosphate and the respective free bases, adenine and hypoxanthine. Also catalyzes the phosphorolysis of S-methyl-5'-thioadenosine into adenine and S-methyl-5-thio-alpha-D-ribose 1-phosphate. Also has adenosine deaminase activity. In Campylobacter jejuni subsp. jejuni serotype O:2 (strain ATCC 700819 / NCTC 11168), this protein is Purine nucleoside phosphorylase Cj1217c.